Here is a 259-residue protein sequence, read N- to C-terminus: Eukaryotic translation initiation factor 3 subunit J (259 aa).

Low complexity predominate over residues M1–S12. A sufficient for interaction with EIF3B region spans residues M1–V70. Residues M1–P111 are disordered. Phosphoserine is present on residues S12, S14, and S21. A compositionally biased stretch (acidic residues) spans E41–K60. A compositionally biased stretch (basic and acidic residues) spans K61–K107. Residues K71–T136 are a coiled coil. K107 participates in a covalent cross-link: Glycyl lysine isopeptide (Lys-Gly) (interchain with G-Cter in SUMO2). At T110 the chain carries Phosphothreonine. S128 is subject to Phosphoserine. Positions S218–Y247 are disordered. A promotes stable association with the 40S ribosome region spans residues Y244–M259. A Phosphotyrosine modification is found at Y255.

This sequence belongs to the eIF-3 subunit J family. Component of the eukaryotic translation initiation factor 3 (eIF-3) complex, which is composed of 13 subunits: EIF3A, EIF3B, EIF3C, EIF3D, EIF3E, EIF3F, EIF3G, EIF3H, EIF3I, EIF3J, EIF3K, EIF3L and EIF3M. The eIF-3 complex appears to include 3 stable modules: module A is composed of EIF3A, EIF3B, EIF3G and EIF3I; module B is composed of EIF3F, EIF3H, and EIF3M; and module C is composed of EIF3C, EIF3D, EIF3E, EIF3K and EIF3L. EIF3C of module C binds EIF3B of module A and EIF3H of module B, thereby linking the three modules. EIF3J is a labile subunit that binds to the eIF-3 complex via EIF3B. The eIF-3 complex interacts with RPS6KB1 under conditions of nutrient depletion. Mitogenic stimulation leads to binding and activation of a complex composed of MTOR and RPTOR, leading to phosphorylation and release of RPS6KB1 and binding of EIF4B to eIF-3. Phosphorylated. Phosphorylation is enhanced upon serum stimulation.

The protein resides in the cytoplasm. In terms of biological role, component of the eukaryotic translation initiation factor 3 (eIF-3) complex, which is required for several steps in the initiation of protein synthesis. The eIF-3 complex associates with the 40S ribosome and facilitates the recruitment of eIF-1, eIF-1A, eIF-2:GTP:methionyl-tRNAi and eIF-5 to form the 43S pre-initiation complex (43S PIC). The eIF-3 complex stimulates mRNA recruitment to the 43S PIC and scanning of the mRNA for AUG recognition. The eIF-3 complex is also required for disassembly and recycling of post-termination ribosomal complexes and subsequently prevents premature joining of the 40S and 60S ribosomal subunits prior to initiation. The eIF-3 complex specifically targets and initiates translation of a subset of mRNAs involved in cell proliferation, including cell cycling, differentiation and apoptosis, and uses different modes of RNA stem-loop binding to exert either translational activation or repression. This subunit binds directly within the mRNA entry channel of the 40S ribosome to the aminoacyl (A) site. It may regulate the interaction between the 43S PIC and mRNA. This chain is Eukaryotic translation initiation factor 3 subunit J, found in Pongo abelii (Sumatran orangutan).